A 190-amino-acid chain; its full sequence is Large ribosomal subunit protein bL9 (190 aa).

It belongs to the bacterial ribosomal protein bL9 family.

In terms of biological role, binds to the 23S rRNA. The polypeptide is Large ribosomal subunit protein bL9 (Methylorubrum populi (strain ATCC BAA-705 / NCIMB 13946 / BJ001) (Methylobacterium populi)).